The chain runs to 297 residues: Palmitoyl-protein thioesterase ABHD10, mitochondrial (297 aa).

The N-terminal 43 residues, 1–43 (MAAWAPCRRWGWAAVSFGRHPGLSASLARKPPRAWWLSACRQK), are a transit peptide targeting the mitochondrion. The region spanning 69 to 196 (IIFIPGYLSN…EIEMKGEWTL (128 aa)) is the AB hydrolase-1 domain. Catalysis depends on charge relay system residues S143, D240, and H270.

It belongs to the AB hydrolase superfamily.

Its subcellular location is the mitochondrion. The enzyme catalyses S-hexadecanoyl-L-cysteinyl-[protein] + H2O = L-cysteinyl-[protein] + hexadecanoate + H(+). It carries out the reaction mycophenolic acid O-acyl-beta-D-glucuronide + H2O = mycophenolate + D-glucuronate + H(+). With respect to regulation, inhibited by palmostatin-B. Its function is as follows. Acts as an acyl-protein thioesterase that hydrolyzes fatty acids from acylated residues in proteins. Regulates the mitochondrial S-depalmitoylation of the nucleophilic active site residue of peroxiredoxin-5/PRDX5, a key antioxidant protein, therefore modulating mitochondrial antioxidant ability. Also catalyzes the deglucuronidation of mycophenolic acid acyl-glucuronide, an active metabolite of the immunosuppressant drug mycophenolate. The protein is Palmitoyl-protein thioesterase ABHD10, mitochondrial of Mus musculus (Mouse).